The primary structure comprises 332 residues: Adenosine deaminase (332 aa).

The Zn(2+) site is built by His12 and His14. Substrate is bound by residues His14, Asp16, and Gly169. His196 contributes to the Zn(2+) binding site. Glu199 functions as the Proton donor in the catalytic mechanism. Residue Asp277 participates in Zn(2+) binding.

This sequence belongs to the metallo-dependent hydrolases superfamily. Adenosine and AMP deaminases family. Adenosine deaminase subfamily. Zn(2+) serves as cofactor.

It catalyses the reaction adenosine + H2O + H(+) = inosine + NH4(+). It carries out the reaction 2'-deoxyadenosine + H2O + H(+) = 2'-deoxyinosine + NH4(+). Its function is as follows. Catalyzes the hydrolytic deamination of adenosine and 2-deoxyadenosine. This chain is Adenosine deaminase, found in Vibrio atlanticus (strain LGP32) (Vibrio splendidus (strain Mel32)).